Reading from the N-terminus, the 191-residue chain is Large ribosomal subunit protein uL6 (191 aa).

Belongs to the universal ribosomal protein uL6 family. Component of the large ribosomal subunit. Mature ribosomes consist of a small (40S) and a large (60S) subunit. The 40S subunit contains about 32 different proteins and 1 molecule of RNA (18S). The 60S subunit contains 45 different proteins and 3 molecules of RNA (25S, 5.8S and 5S).

It localises to the cytoplasm. Its function is as follows. Component of the ribosome, a large ribonucleoprotein complex responsible for the synthesis of proteins in the cell. The small ribosomal subunit (SSU) binds messenger RNAs (mRNAs) and translates the encoded message by selecting cognate aminoacyl-transfer RNA (tRNA) molecules. The large subunit (LSU) contains the ribosomal catalytic site termed the peptidyl transferase center (PTC), which catalyzes the formation of peptide bonds, thereby polymerizing the amino acids delivered by tRNAs into a polypeptide chain. The nascent polypeptides leave the ribosome through a tunnel in the LSU and interact with protein factors that function in enzymatic processing, targeting, and the membrane insertion of nascent chains at the exit of the ribosomal tunnel. In Candida albicans (strain SC5314 / ATCC MYA-2876) (Yeast), this protein is Large ribosomal subunit protein uL6.